Here is a 552-residue protein sequence, read N- to C-terminus: L-ascorbate oxidase (552 aa).

Plastocyanin-like domains follow at residues 1-122 and 134-300; these read SQIR…LIVD and DGEI…NYLP. 3 disulfides stabilise this stretch: Cys-19–Cys-201, Cys-81–Cys-538, and Cys-180–Cys-193. Cu cation-binding residues include His-60 and His-62. N-linked (GlcNAc...) asparagine glycosylation is present at Asn-92. Residues His-104 and His-106 each coordinate Cu cation. 2 N-linked (GlcNAc...) asparagine glycosylation sites follow: Asn-325 and Asn-440. Residues 344 to 523 enclose the Plastocyanin-like 3 domain; sequence NRRIFLLNTQ…HMGMGVVFAE (180 aa). Residues His-445, His-448, His-450, His-506, Cys-507, His-508, His-512, and Met-517 each coordinate Cu cation.

Belongs to the multicopper oxidase family. As to quaternary structure, dimer. Requires Cu cation as cofactor.

It localises to the secreted. It catalyses the reaction 4 L-ascorbate + O2 = 4 monodehydro-L-ascorbate radical + 2 H2O. Functionally, may be involved in a redox system involving ascorbic acid. This Cucurbita pepo var. melopepo (Zucchini) protein is L-ascorbate oxidase.